A 291-amino-acid polypeptide reads, in one-letter code: Ecto-ADP-ribosyltransferase 5 (291 aa).

Positions 1–22 (MALAALMIALGSLGLHTWQAQA) are cleaved as a signal peptide. Cys42 and Cys258 are oxidised to a cystine. The 191-residue stretch at 62–252 (ALLRESWEAA…LVTLWSYNQT (191 aa)) folds into the TR mART core domain. Tyr99 contributes to the NAD(+) binding site. N-linked (GlcNAc...) asparagine glycosylation is present at Asn101. Arg160 and Gln180 together coordinate NAD(+). Residue Arg160 is part of the active site. Ser183 is an active-site residue. Asn196 is a glycosylation site (N-linked (GlcNAc...) asparagine). Residue Ser214 coordinates NAD(+). The active site involves Glu221. The N-linked (GlcNAc...) asparagine glycan is linked to Asn250.

It belongs to the Arg-specific ADP-ribosyltransferase family.

It localises to the secreted. It catalyses the reaction L-arginyl-[protein] + NAD(+) = N(omega)-(ADP-D-ribosyl)-L-arginyl-[protein] + nicotinamide + H(+). The chain is Ecto-ADP-ribosyltransferase 5 (ART5) from Homo sapiens (Human).